A 224-amino-acid polypeptide reads, in one-letter code: Urease accessory protein UreF (224 aa).

This sequence belongs to the UreF family. UreD, UreF and UreG form a complex that acts as a GTP-hydrolysis-dependent molecular chaperone, activating the urease apoprotein by helping to assemble the nickel containing metallocenter of UreC. The UreE protein probably delivers the nickel.

The protein localises to the cytoplasm. Its function is as follows. Required for maturation of urease via the functional incorporation of the urease nickel metallocenter. The protein is Urease accessory protein UreF of Pseudomonas fluorescens (strain SBW25).